The chain runs to 96 residues: Large ribosomal subunit protein uL23 (96 aa).

It belongs to the universal ribosomal protein uL23 family. In terms of assembly, part of the 50S ribosomal subunit. Contacts protein L29, and trigger factor when it is bound to the ribosome.

Functionally, one of the early assembly proteins it binds 23S rRNA. One of the proteins that surrounds the polypeptide exit tunnel on the outside of the ribosome. Forms the main docking site for trigger factor binding to the ribosome. This is Large ribosomal subunit protein uL23 from Solidesulfovibrio magneticus (strain ATCC 700980 / DSM 13731 / RS-1) (Desulfovibrio magneticus).